Consider the following 237-residue polypeptide: 2,3-bisphosphoglycerate-dependent phosphoglycerate mutase (237 aa).

Substrate contacts are provided by residues 8 to 15, 21 to 22, Arg60, 87 to 90, Lys98, 114 to 115, and 180 to 181; these read RHGQSQWN, TG, ERHY, RR, and GN. The active-site Tele-phosphohistidine intermediate is His9. Glu87 serves as the catalytic Proton donor/acceptor.

This sequence belongs to the phosphoglycerate mutase family. BPG-dependent PGAM subfamily. In terms of assembly, homodimer.

The catalysed reaction is (2R)-2-phosphoglycerate = (2R)-3-phosphoglycerate. It functions in the pathway carbohydrate degradation; glycolysis; pyruvate from D-glyceraldehyde 3-phosphate: step 3/5. Its function is as follows. Catalyzes the interconversion of 2-phosphoglycerate and 3-phosphoglycerate. The chain is 2,3-bisphosphoglycerate-dependent phosphoglycerate mutase from Caulobacter vibrioides (strain ATCC 19089 / CIP 103742 / CB 15) (Caulobacter crescentus).